The sequence spans 115 residues: Iron-sulfur cluster insertion protein ErpA (115 aa).

Iron-sulfur cluster-binding residues include Cys-43, Cys-107, and Cys-109.

The protein belongs to the HesB/IscA family. In terms of assembly, homodimer. Requires iron-sulfur cluster as cofactor.

Functionally, required for insertion of 4Fe-4S clusters for at least IspG. This chain is Iron-sulfur cluster insertion protein ErpA, found in Buchnera aphidicola subsp. Baizongia pistaciae (strain Bp).